Consider the following 351-residue polypeptide: Anthranilate phosphoribosyltransferase (351 aa).

5-phospho-alpha-D-ribose 1-diphosphate contacts are provided by residues Gly-84, 87–88, 95–98, 113–121, and Ala-125; these read GD, NISS, and KHGNRGASS. Gly-84 provides a ligand contact to anthranilate. Residue Ser-97 participates in Mg(2+) binding. Residue Asn-116 participates in anthranilate binding. Residue Arg-171 coordinates anthranilate. Asp-229 and Lys-230 together coordinate Mg(2+).

Belongs to the anthranilate phosphoribosyltransferase family. As to quaternary structure, homodimer. Requires Mg(2+) as cofactor.

It carries out the reaction N-(5-phospho-beta-D-ribosyl)anthranilate + diphosphate = 5-phospho-alpha-D-ribose 1-diphosphate + anthranilate. The protein operates within amino-acid biosynthesis; L-tryptophan biosynthesis; L-tryptophan from chorismate: step 2/5. Its function is as follows. Catalyzes the transfer of the phosphoribosyl group of 5-phosphorylribose-1-pyrophosphate (PRPP) to anthranilate to yield N-(5'-phosphoribosyl)-anthranilate (PRA). This Clavibacter sepedonicus (Clavibacter michiganensis subsp. sepedonicus) protein is Anthranilate phosphoribosyltransferase.